The sequence spans 612 residues: Dihydroxy-acid dehydratase (612 aa).

Residue D81 participates in Mg(2+) binding. [2Fe-2S] cluster is bound at residue C122. Mg(2+)-binding residues include D123 and K124. K124 carries the N6-carboxylysine modification. C195 contacts [2Fe-2S] cluster. Residue E491 participates in Mg(2+) binding. Catalysis depends on S517, which acts as the Proton acceptor.

Belongs to the IlvD/Edd family. In terms of assembly, homodimer. [2Fe-2S] cluster is required as a cofactor. It depends on Mg(2+) as a cofactor.

It catalyses the reaction (2R)-2,3-dihydroxy-3-methylbutanoate = 3-methyl-2-oxobutanoate + H2O. It carries out the reaction (2R,3R)-2,3-dihydroxy-3-methylpentanoate = (S)-3-methyl-2-oxopentanoate + H2O. It participates in amino-acid biosynthesis; L-isoleucine biosynthesis; L-isoleucine from 2-oxobutanoate: step 3/4. It functions in the pathway amino-acid biosynthesis; L-valine biosynthesis; L-valine from pyruvate: step 3/4. In terms of biological role, functions in the biosynthesis of branched-chain amino acids. Catalyzes the dehydration of (2R,3R)-2,3-dihydroxy-3-methylpentanoate (2,3-dihydroxy-3-methylvalerate) into 2-oxo-3-methylpentanoate (2-oxo-3-methylvalerate) and of (2R)-2,3-dihydroxy-3-methylbutanoate (2,3-dihydroxyisovalerate) into 2-oxo-3-methylbutanoate (2-oxoisovalerate), the penultimate precursor to L-isoleucine and L-valine, respectively. The protein is Dihydroxy-acid dehydratase of Rhizobium etli (strain ATCC 51251 / DSM 11541 / JCM 21823 / NBRC 15573 / CFN 42).